A 521-amino-acid polypeptide reads, in one-letter code: Probable inorganic phosphate transporter 1-3 (521 aa).

At 1 to 24 (MADQQLGVLKALDVAKTQLYHFTA) the chain is on the cytoplasmic side. Residues 25 to 45 (IVIAGMGFFTDAYDLFCVSLV) form a helical membrane-spanning segment. Topologically, residues 46–70 (TKLLGRLYYFNPTSAKPGSLPPHVA) are extracellular. A helical transmembrane segment spans residues 71–91 (AAVNGVALCGTLAGQLFFGWL). Residues 92 to 99 (GDKLGRKK) are Cytoplasmic-facing. Residues 100–120 (VYGITLIMMILCSVASGLSLG) traverse the membrane as a helical segment. Over 121 to 131 (NSAKGVMTTLC) the chain is Extracellular. The chain crosses the membrane as a helical span at residues 132–152 (FFRFWLGFGIGGDYPLSATIM). The Cytoplasmic segment spans residues 153–161 (SEYANKKTR). A helical membrane pass occupies residues 162-182 (GAFIAAVFAMQGVGILAGGFV). At 183–211 (ALAVSSIFDKKFPSPTYEQDRFLSTPPQA) the chain is on the extracellular side. The chain crosses the membrane as a helical span at residues 212–232 (DYIWRIIVMFGALPAALTYYW). Over 233–292 (RMKMPETARYTALVAKNIKQATADMSKVLQTDLELEERVEDDVKDPKKNYGLFSKEFLRR) the chain is Cytoplasmic. The helical transmembrane segment at 293 to 313 (HGLHLLGTTSTWFLLDIAFYS) threads the bilayer. Over 314-348 (QNLFQKDIFSAIGWIPKAATMNAIHEVFKIARAQT) the chain is Extracellular. The chain crosses the membrane as a helical span at residues 349 to 369 (LIALCSTVPGYWFTVAFIDII). The Cytoplasmic segment spans residues 370–371 (GR). Residues 372–392 (FAIQLMGFFMMTVFMFAIAFP) form a helical membrane-spanning segment. Residues 393-402 (YNHWILPDNR) are Extracellular-facing. The chain crosses the membrane as a helical span at residues 403–423 (IGFVVMYSLTFFFANFGPNAT). The Cytoplasmic portion of the chain corresponds to 424–441 (TFIVPAEIFPARLRSTCH). The helical transmembrane segment at 442-462 (GISAATGKAGAIVGAFGFLYA) threads the bilayer. Over 463–484 (AQPQDKTKTDAGYPPGIGVKNS) the chain is Extracellular. The chain crosses the membrane as a helical span at residues 485–505 (LIMLGVINFVGMLFTFLVPEP). Residues 506-521 (KGKSLEELSGEAEVDK) lie on the Cytoplasmic side of the membrane.

Belongs to the major facilitator superfamily. Phosphate:H(+) symporter (TC 2.A.1.9) family. Mainly expressed in roots, especially in the stele of the primary root, the pericycle and trichoblasts of secondary roots. To a lower extent, present in hydathodes and vascular tissues of young leaves.

It is found in the membrane. High-affinity transporter for external inorganic phosphate. This is Probable inorganic phosphate transporter 1-3 (PHT1-3) from Arabidopsis thaliana (Mouse-ear cress).